A 328-amino-acid polypeptide reads, in one-letter code: Cytochrome c biogenesis protein CcsA (328 aa).

The next 8 helical transmembrane spans lie at 13 to 33, 46 to 66, 73 to 93, 101 to 121, 146 to 166, 234 to 254, 263 to 283, and 295 to 315; these read ISFS…LVNL, GIII…IFSG, LYES…ISFF, LNAI…SGLL, MVLG…LLVI, IISL…VWAN, WDPK…YLHI, and AIVA…VNLL.

It belongs to the CcmF/CycK/Ccl1/NrfE/CcsA family. May interact with Ccs1.

It is found in the plastid. The protein localises to the chloroplast thylakoid membrane. Its function is as follows. Required during biogenesis of c-type cytochromes (cytochrome c6 and cytochrome f) at the step of heme attachment. The chain is Cytochrome c biogenesis protein CcsA from Aethionema grandiflorum (Persian stone-cress).